The following is a 154-amino-acid chain: Myoglobin (154 aa).

Residues 2-148 (GLSDGEWQLV…FRNDMAAKYK (147 aa)) form the Globin domain. Ser4 bears the Phosphoserine mark. His65 is a binding site for nitrite. Residue His65 participates in O2 binding. Residue Thr68 is modified to Phosphothreonine. A heme b-binding site is contributed by His94.

The protein belongs to the globin family. As to quaternary structure, monomeric.

The protein resides in the cytoplasm. The protein localises to the sarcoplasm. The enzyme catalyses Fe(III)-heme b-[protein] + nitric oxide + H2O = Fe(II)-heme b-[protein] + nitrite + 2 H(+). It catalyses the reaction H2O2 + AH2 = A + 2 H2O. Functionally, monomeric heme protein which primary function is to store oxygen and facilitate its diffusion within muscle tissues. Reversibly binds oxygen through a pentacoordinated heme iron and enables its timely and efficient release as needed during periods of heightened demand. Depending on the oxidative conditions of tissues and cells, and in addition to its ability to bind oxygen, it also has a nitrite reductase activity whereby it regulates the production of bioactive nitric oxide. Under stress conditions, like hypoxia and anoxia, it also protects cells against reactive oxygen species thanks to its pseudoperoxidase activity. This is Myoglobin (MB) from Didelphis virginiana (North American opossum).